The sequence spans 42 residues: Photosystem I reaction center subunit IX (42 aa).

The chain crosses the membrane as a helical span at residues 7–27; sequence YLSTAPVLAAVWFTVLAGILI.

This sequence belongs to the PsaJ family.

It localises to the plastid. It is found in the chloroplast thylakoid membrane. Its function is as follows. May help in the organization of the PsaE and PsaF subunits. This Ostreococcus tauri protein is Photosystem I reaction center subunit IX.